The sequence spans 124 residues: Ribosome-binding factor A (124 aa).

Belongs to the RbfA family. Monomer. Binds 30S ribosomal subunits, but not 50S ribosomal subunits or 70S ribosomes.

The protein resides in the cytoplasm. Functionally, one of several proteins that assist in the late maturation steps of the functional core of the 30S ribosomal subunit. Associates with free 30S ribosomal subunits (but not with 30S subunits that are part of 70S ribosomes or polysomes). Required for efficient processing of 16S rRNA. May interact with the 5'-terminal helix region of 16S rRNA. This is Ribosome-binding factor A from Buchnera aphidicola subsp. Schizaphis graminum (strain Sg).